The sequence spans 107 residues: uncharacterized protein (107 aa).

The helical transmembrane segment at 52-72 (LIIHDLFIYIFILNFFFFPFC) threads the bilayer.

The protein localises to the membrane. This is an uncharacterized protein from Saccharomyces cerevisiae (strain ATCC 204508 / S288c) (Baker's yeast).